Reading from the N-terminus, the 490-residue chain is Bifunctional protein HldE (490 aa).

The tract at residues 1–330 is ribokinase; the sequence is MERKNVESLF…GSMGFQHSDS (330 aa). 205–208 contributes to the ATP binding site; the sequence is NRKE. D275 is a catalytic residue. Residues 356–490 form a cytidylyltransferase region; sequence FTNGCFDLLH…DKILRAYGEE (135 aa).

This sequence in the N-terminal section; belongs to the carbohydrate kinase PfkB family. The protein in the C-terminal section; belongs to the cytidylyltransferase family. Homodimer.

The enzyme catalyses D-glycero-beta-D-manno-heptose 7-phosphate + ATP = D-glycero-beta-D-manno-heptose 1,7-bisphosphate + ADP + H(+). It catalyses the reaction D-glycero-beta-D-manno-heptose 1-phosphate + ATP + H(+) = ADP-D-glycero-beta-D-manno-heptose + diphosphate. It functions in the pathway nucleotide-sugar biosynthesis; ADP-L-glycero-beta-D-manno-heptose biosynthesis; ADP-L-glycero-beta-D-manno-heptose from D-glycero-beta-D-manno-heptose 7-phosphate: step 1/4. It participates in nucleotide-sugar biosynthesis; ADP-L-glycero-beta-D-manno-heptose biosynthesis; ADP-L-glycero-beta-D-manno-heptose from D-glycero-beta-D-manno-heptose 7-phosphate: step 3/4. Its function is as follows. Catalyzes the phosphorylation of D-glycero-D-manno-heptose 7-phosphate at the C-1 position to selectively form D-glycero-beta-D-manno-heptose-1,7-bisphosphate. Catalyzes the ADP transfer from ATP to D-glycero-beta-D-manno-heptose 1-phosphate, yielding ADP-D-glycero-beta-D-manno-heptose. The polypeptide is Bifunctional protein HldE (Geobacter metallireducens (strain ATCC 53774 / DSM 7210 / GS-15)).